The primary structure comprises 249 residues: MGVAFDKCDTRPAHIDAILNGLDRYNPETTTVFQDYVAQQCEDRTFDCYANLALLKLYQFNPHLLQAETATNILAKALTVFPSPAFSLCLALLPAHTQPFPTADADASQTSDFVESVQKLARLSTLLESAQYAQFWSTLNSDDLYADLVADVAGFEELVRIRIAVEVGKAFREINAEVLEQWFDLRSREALEKFVTEVCGWEVDKAGPNGTVVKVPSNKENEVRSEVKSEHVGVEMFGRVIRRGFEQAA.

In terms of domain architecture, PCI spans 46-222 (FDCYANLALL…VKVPSNKENE (177 aa)).

It belongs to the eIF-3 subunit K family. As to quaternary structure, component of the eukaryotic translation initiation factor 3 (eIF-3) complex.

It is found in the cytoplasm. In terms of biological role, component of the eukaryotic translation initiation factor 3 (eIF-3) complex, which is involved in protein synthesis of a specialized repertoire of mRNAs and, together with other initiation factors, stimulates binding of mRNA and methionyl-tRNAi to the 40S ribosome. The eIF-3 complex specifically targets and initiates translation of a subset of mRNAs involved in cell proliferation. The chain is Eukaryotic translation initiation factor 3 subunit K from Aspergillus clavatus (strain ATCC 1007 / CBS 513.65 / DSM 816 / NCTC 3887 / NRRL 1 / QM 1276 / 107).